We begin with the raw amino-acid sequence, 96 residues long: Cytochrome b (96 aa).

A run of 3 helical transmembrane segments spans residues 1–15 (LCXI…FLAM), 39–60 (WLIR…YLHI), and 75–95 (WNVG…GYVL). 2 residues coordinate heme b: H45 and H59.

The protein belongs to the cytochrome b family. In terms of assembly, the cytochrome bc1 complex contains 3 respiratory subunits (MT-CYB, CYC1 and UQCRFS1), 2 core proteins (UQCRC1 and UQCRC2) and probably 6 low-molecular weight proteins. Requires heme b as cofactor.

Its subcellular location is the mitochondrion inner membrane. In terms of biological role, component of the ubiquinol-cytochrome c reductase complex (complex III or cytochrome b-c1 complex) that is part of the mitochondrial respiratory chain. The b-c1 complex mediates electron transfer from ubiquinol to cytochrome c. Contributes to the generation of a proton gradient across the mitochondrial membrane that is then used for ATP synthesis. This is Cytochrome b (mt-cyb) from Geophagus steindachneri (Red hump earth eater).